The primary structure comprises 415 residues: Procollagen C-endopeptidase enhancer 2 (415 aa).

Residues 1 to 23 (MRGANAWAPLCLLLAAATQLSRQ) form the signal peptide. 7 cysteine pairs are disulfide-bonded: C33–C59, C86–C107, C154–C181, C208–C231, C297–C364, C301–C367, and C312–C415. 2 CUB domains span residues 33 to 144 (CGGI…FSAA) and 154 to 268 (CGGL…YIFR). The NTR domain maps to 297 to 415 (CQQKCRRTGT…LLDALKNKQC (119 aa)). A glycan (N-linked (GlcNAc...) asparagine) is linked at N355.

In terms of assembly, interacts with heparin with high affinity, and type I or II collagen. O-glycosylated; contains sialic acid. As to expression, highly expressed in the heart, trabecular meshwork, pituitary gland, bladder, mammary gland, trachea and placenta and weakly expressed in the brain. Expressed in cartilage.

Its subcellular location is the secreted. Binds to the C-terminal propeptide of types I and II procollagens and may enhance the cleavage of that propeptide by BMP1. In Homo sapiens (Human), this protein is Procollagen C-endopeptidase enhancer 2 (PCOLCE2).